The sequence spans 142 residues: Large ribosomal subunit protein uL11 (142 aa).

This sequence belongs to the universal ribosomal protein uL11 family. In terms of assembly, part of the ribosomal stalk of the 50S ribosomal subunit. Interacts with L10 and the large rRNA to form the base of the stalk. L10 forms an elongated spine to which L12 dimers bind in a sequential fashion forming a multimeric L10(L12)X complex. Post-translationally, one or more lysine residues are methylated.

Forms part of the ribosomal stalk which helps the ribosome interact with GTP-bound translation factors. This is Large ribosomal subunit protein uL11 from Baumannia cicadellinicola subsp. Homalodisca coagulata.